The chain runs to 781 residues: Cation channel sperm-associated auxiliary subunit delta (781 aa).

The first 20 residues, 1-20 (MLVLMLVVATTFRLCPLVKA), serve as a signal peptide directing secretion. The Extracellular portion of the chain corresponds to 21-725 (RPLCRIRTLR…YGAFPLSIFP (705 aa)). Disulfide bonds link Cys-24–Cys-370, Cys-60–Cys-146, Cys-145–Cys-153, Cys-388–Cys-497, Cys-511–Cys-705, Cys-526–Cys-573, and Cys-625–Cys-655. N-linked (GlcNAc...) asparagine glycans are attached at residues Asn-231, Asn-294, Asn-458, Asn-473, Asn-539, and Asn-631. Residues 726-749 (PEITIVLLTAATLLSIWLAYMIPQ) form a helical membrane-spanning segment. At 750-781 (LLHTEQGLEGNGFWVRLYQRCRKSCACLWGRC) the chain is on the cytoplasmic side.

The protein belongs to the CATSPERD family. Component of the CatSper complex or CatSpermasome composed of the core pore-forming members CATSPER1, CATSPER2, CATSPER3 and CATSPER4 as well as auxiliary members CATSPERB, CATSPERG, CATSPERD, CATSPERE, CATSPERZ, C2CD6/CATSPERT, TMEM249, TMEM262 and EFCAB9. HSPA1 may be an additional auxiliary complex member. The core complex members CATSPER1, CATSPER2, CATSPER3 and CATSPER4 form a heterotetrameric channel. The auxiliary CATSPERB, CATSPERG, CATSPERD and CATSPERE subunits form a pavilion-like structure over the pore which stabilizes the complex through interactions with CATSPER4, CATSPER3, CATSPER1 and CATSPER2 respectively. TMEM262/CATSPERH interacts with CATSPERB, further stabilizing the complex. C2CD6/CATSPERT interacts at least with CATSPERD and is required for targeting the CatSper complex in the flagellar membrane.

The protein resides in the cell projection. It localises to the cilium. It is found in the flagellum membrane. In terms of biological role, auxiliary component of the CatSper complex, a complex involved in sperm cell hyperactivation. Sperm cell hyperactivation is needed for sperm motility which is essential late in the preparation of sperm for fertilization. Required for CATSPER1 stability before intraflagellar transport and/or incorporation of the CatSper complex channel into the flagellar membrane. The sequence is that of Cation channel sperm-associated auxiliary subunit delta from Bos taurus (Bovine).